Here is a 151-residue protein sequence, read N- to C-terminus: 3-dehydroquinate dehydratase (151 aa).

Catalysis depends on Tyr26, which acts as the Proton acceptor. Substrate is bound by residues Asn75, His81, and Asp88. Catalysis depends on His101, which acts as the Proton donor. Substrate contacts are provided by residues 102 to 103 (LS) and Arg112.

It belongs to the type-II 3-dehydroquinase family. As to quaternary structure, homododecamer.

The catalysed reaction is 3-dehydroquinate = 3-dehydroshikimate + H2O. Its pathway is metabolic intermediate biosynthesis; chorismate biosynthesis; chorismate from D-erythrose 4-phosphate and phosphoenolpyruvate: step 3/7. In terms of biological role, catalyzes a trans-dehydration via an enolate intermediate. In Shewanella halifaxensis (strain HAW-EB4), this protein is 3-dehydroquinate dehydratase.